Reading from the N-terminus, the 77-residue chain is Conotoxin ArMKLT2-0122 (77 aa).

The signal sequence occupies residues 1–22 (MKLTCVLIVAVLFLTACQLIAA). Residues 23-44 (DDSRDLKRFSRRKMRDGMLNTK) constitute a propeptide that is removed on maturation. Intrachain disulfides connect Cys50-Cys65, Cys57-Cys68, and Cys64-Cys73.

It belongs to the conotoxin O1 superfamily. In terms of tissue distribution, expressed by the venom duct.

Its subcellular location is the secreted. This Conus arenatus (Sand-dusted cone) protein is Conotoxin ArMKLT2-0122.